The primary structure comprises 637 residues: Clathrin coat assembly protein AP180A (637 aa).

Residues 1-126 (MTTYFKLVKG…REFGKIKKDY (126 aa)) enclose the ENTH domain. Positions 555 to 637 (TQNHLQQQQQ…YANNLNLIDM (83 aa)) are disordered. Composition is skewed to low complexity over residues 560–579 (QQQQ…QPQQ) and 600–622 (QPQN…TQQP). The clathrin-binding stretch occupies residues 587–637 (AGANPVTNITGTVQPQNFPFYPQQQPQPEQSQTQQPVLGNQYANNLNLIDM). Residues 623–637 (VLGNQYANNLNLIDM) are compositionally biased toward polar residues.

The protein belongs to the AP180 family. As to quaternary structure, interacts with PAN1 and the clathrin heavy and light chains CHC1 and CLC1.

The protein resides in the bud. It is found in the bud neck. It localises to the cell membrane. The protein localises to the cytoplasm. Functionally, involved in endocytosis and clathrin cage assembly. In Saccharomyces cerevisiae (strain ATCC 204508 / S288c) (Baker's yeast), this protein is Clathrin coat assembly protein AP180A (YAP1801).